A 208-amino-acid chain; its full sequence is Thiamine-phosphate synthase (208 aa).

4-amino-2-methyl-5-(diphosphooxymethyl)pyrimidine-binding positions include 37-39 (QVR) and asparagine 70. 2 residues coordinate Mg(2+): aspartate 71 and aspartate 90. 4-amino-2-methyl-5-(diphosphooxymethyl)pyrimidine is bound at residue threonine 109. 135-137 (TTS) lines the 2-[(2R,5Z)-2-carboxy-4-methylthiazol-5(2H)-ylidene]ethyl phosphate pocket. 4-amino-2-methyl-5-(diphosphooxymethyl)pyrimidine is bound at residue lysine 138. Alanine 166 serves as a coordination point for 2-[(2R,5Z)-2-carboxy-4-methylthiazol-5(2H)-ylidene]ethyl phosphate.

It belongs to the thiamine-phosphate synthase family. It depends on Mg(2+) as a cofactor.

The enzyme catalyses 2-[(2R,5Z)-2-carboxy-4-methylthiazol-5(2H)-ylidene]ethyl phosphate + 4-amino-2-methyl-5-(diphosphooxymethyl)pyrimidine + 2 H(+) = thiamine phosphate + CO2 + diphosphate. It carries out the reaction 2-(2-carboxy-4-methylthiazol-5-yl)ethyl phosphate + 4-amino-2-methyl-5-(diphosphooxymethyl)pyrimidine + 2 H(+) = thiamine phosphate + CO2 + diphosphate. It catalyses the reaction 4-methyl-5-(2-phosphooxyethyl)-thiazole + 4-amino-2-methyl-5-(diphosphooxymethyl)pyrimidine + H(+) = thiamine phosphate + diphosphate. The protein operates within cofactor biosynthesis; thiamine diphosphate biosynthesis; thiamine phosphate from 4-amino-2-methyl-5-diphosphomethylpyrimidine and 4-methyl-5-(2-phosphoethyl)-thiazole: step 1/1. Its function is as follows. Condenses 4-methyl-5-(beta-hydroxyethyl)thiazole monophosphate (THZ-P) and 2-methyl-4-amino-5-hydroxymethyl pyrimidine pyrophosphate (HMP-PP) to form thiamine monophosphate (TMP). This is Thiamine-phosphate synthase from Salinispora tropica (strain ATCC BAA-916 / DSM 44818 / JCM 13857 / NBRC 105044 / CNB-440).